A 65-amino-acid polypeptide reads, in one-letter code: Large ribosomal subunit protein uL29 (65 aa).

It belongs to the universal ribosomal protein uL29 family.

This Leptothrix cholodnii (strain ATCC 51168 / LMG 8142 / SP-6) (Leptothrix discophora (strain SP-6)) protein is Large ribosomal subunit protein uL29.